The chain runs to 441 residues: Deoxyguanosinetriphosphate triphosphohydrolase-like protein (441 aa).

Positions 1 to 27 are disordered; it reads MTSSVWQERRHGEDKQRRNDHRSPYQR. The segment covering 7–27 has biased composition (basic and acidic residues); it reads QERRHGEDKQRRNDHRSPYQR. Positions 59–252 constitute an HD domain; it reads RLTHSLEVSQ…MELADDIAYA (194 aa).

The protein belongs to the dGTPase family. Type 2 subfamily.

In Shewanella oneidensis (strain ATCC 700550 / JCM 31522 / CIP 106686 / LMG 19005 / NCIMB 14063 / MR-1), this protein is Deoxyguanosinetriphosphate triphosphohydrolase-like protein.